The following is a 298-amino-acid chain: Cyclic dof factor 1 (298 aa).

The interval 27–46 (EEEEKNQNKTLTDQSEKDKT) is disordered. The Dof-type zinc-finger motif lies at 54–108 (LPCPRCNSMETKFCYYNNYNVNQPRHFCKACQRYWTSGGTMRSVPIGAGRRKNKN). Zn(2+)-binding residues include Cys56, Cys59, Cys81, and Cys84. The interval 200–231 (SSSPTSTLGKHSRDEDETVKQKQRNGSVLVPK) is disordered. Residues 210–219 (HSRDEDETVK) are compositionally biased toward basic and acidic residues.

In terms of assembly, interacts with ADO2 (via kelch repeats), ADO3 (via kelch repeats) and GI (via N-terminus). In terms of processing, ubiquitinated. In terms of tissue distribution, expressed in the vascular tissues of cotyledons, leaves and hypocotyls and in stomata. Not detected in roots.

It is found in the nucleus. Functionally, transcription factor that binds specifically to a 5'-AA[AG]G-3' consensus core sequence. A flanking TGT sequence contributes to the specificity of binding. Regulates a photoperiodic flowering response. Transcriptional repressor of 'CONSTANS' expression. The DNA-binding ability is not modulated by 'GIGANTEA' but the stability of CDF1 is controlled by the proteasome-dependent pathway. Ubiquitinated by the SCF(ADO3) E3 ubiquitin ligase complex. Binds to the FT promoter in the morning. The chain is Cyclic dof factor 1 (CDF1) from Arabidopsis thaliana (Mouse-ear cress).